The sequence spans 282 residues: Putative 4-diphosphocytidyl-2-C-methyl-D-erythritol kinase (282 aa).

Lys9 is a catalytic residue. 93-103 (PVSAGLAGGSA) contributes to the ATP binding site. The active site involves Asp135.

This sequence belongs to the GHMP kinase family. IspE subfamily.

The enzyme catalyses 4-CDP-2-C-methyl-D-erythritol + ATP = 4-CDP-2-C-methyl-D-erythritol 2-phosphate + ADP + H(+). Catalyzes the phosphorylation of the position 2 hydroxy group of 4-diphosphocytidyl-2C-methyl-D-erythritol. The chain is Putative 4-diphosphocytidyl-2-C-methyl-D-erythritol kinase from Staphylococcus aureus (strain MRSA252).